Reading from the N-terminus, the 189-residue chain is Peptide deformylase (189 aa).

The Fe cation site is built by Cys-116 and His-159. Residue Glu-160 is part of the active site. Fe cation is bound at residue His-163.

This sequence belongs to the polypeptide deformylase family. Fe(2+) is required as a cofactor.

It carries out the reaction N-terminal N-formyl-L-methionyl-[peptide] + H2O = N-terminal L-methionyl-[peptide] + formate. In terms of biological role, removes the formyl group from the N-terminal Met of newly synthesized proteins. Requires at least a dipeptide for an efficient rate of reaction. N-terminal L-methionine is a prerequisite for activity but the enzyme has broad specificity at other positions. In Limosilactobacillus fermentum (strain NBRC 3956 / LMG 18251) (Lactobacillus fermentum), this protein is Peptide deformylase.